A 423-amino-acid polypeptide reads, in one-letter code: uncharacterized protein (423 aa).

Substrate is bound by residues serine 51, aspartate 138, and asparagine 150. ATP is bound by residues 170–171 (TD) and 214–220 (TGGMRTK). The PUA domain maps to 315–406 (KGAIIIDENS…EKIHDVLGYS (92 aa)).

This sequence belongs to the glutamate 5-kinase family.

The protein resides in the cytoplasm. This is an uncharacterized protein from Saccharomyces cerevisiae (strain ATCC 204508 / S288c) (Baker's yeast).